Here is a 259-residue protein sequence, read N- to C-terminus: 14-3-3-like protein (259 aa).

The interval 238–259 (MQDPAAGDDREGADMKVEDAEP) is disordered. Residues 244-259 (GDDREGADMKVEDAEP) are compositionally biased toward basic and acidic residues.

It belongs to the 14-3-3 family.

The sequence is that of 14-3-3-like protein from Chlamydomonas reinhardtii (Chlamydomonas smithii).